Here is a 40-residue protein sequence, read N- to C-terminus: uncharacterized protein (40 aa).

Residues 1 to 17 (MAVAALAMYGGTCGACA) form the signal peptide.

This is an uncharacterized protein from Archaeoglobus fulgidus (strain ATCC 49558 / DSM 4304 / JCM 9628 / NBRC 100126 / VC-16).